Here is a 653-residue protein sequence, read N- to C-terminus: Bifunctional lysine-specific demethylase and histidyl-hydroxylase NO66 (653 aa).

Over residues 1–12 the composition is skewed to low complexity; that stretch reads MKKATTSAAAKS. Disordered regions lie at residues 1–50 and 65–137; these read MKKA…DMLA and FDDD…LERT. Over residues 13-26 the composition is skewed to polar residues; sequence QGNSKMQKNANNGT. Residue serine 44 is modified to Phosphoserine. The segment covering 72-86 has biased composition (low complexity); the sequence is STSKKTQSGSAAAAK. Serine 131 carries the phosphoserine modification. Position 137 is a phosphothreonine (threonine 137). Serine 138 carries the post-translational modification Phosphoserine. The disordered stretch occupies residues 184-208; sequence AEPTEEGNNNNDEKETETIETHKAD. Basic and acidic residues predominate over residues 194–208; that stretch reads NDEKETETIETHKAD. The JmjC domain maps to 300-450; that stretch reads FYSDGCSIRL…NLLETLMPMV (151 aa). Fe cation contacts are provided by histidine 351, aspartate 353, and histidine 416.

The protein belongs to the ROX family. NO66 subfamily. Fe(2+) serves as cofactor.

Its subcellular location is the nucleus. The catalysed reaction is N(6),N(6)-dimethyl-L-lysyl(36)-[histone H3] + 2 2-oxoglutarate + 2 O2 = L-lysyl(36)-[histone H3] + 2 formaldehyde + 2 succinate + 2 CO2. Its function is as follows. Oxygenase that can act as both a histone lysine demethylase and a ribosomal histidine hydroxylase. Specifically demethylates 'Lys-4' (H3K4me) and 'Lys-36' (H3K36me) of histone H3, thereby playing a central role in histone code. This Drosophila melanogaster (Fruit fly) protein is Bifunctional lysine-specific demethylase and histidyl-hydroxylase NO66.